The primary structure comprises 837 residues: Protein translocase subunit SecA 1 (837 aa).

ATP-binding positions include Gln85, 103–107 (GEGKT), and Asp492. The segment covering 787 to 806 (QEVAKGEAVHPKEDGEEPKK) has biased composition (basic and acidic residues). The interval 787-813 (QEVAKGEAVHPKEDGEEPKKKPIRKAV) is disordered. Zn(2+) is bound by residues Cys821, Cys823, Cys832, and Cys833.

Belongs to the SecA family. As to quaternary structure, monomer and homodimer. Part of the essential Sec protein translocation apparatus which comprises SecA, SecYEG and auxiliary proteins SecDF. Other proteins may also be involved. The cofactor is Zn(2+).

It is found in the cell membrane. Its subcellular location is the cytoplasm. It carries out the reaction ATP + H2O + cellular proteinSide 1 = ADP + phosphate + cellular proteinSide 2.. Part of the Sec protein translocase complex. Interacts with the SecYEG preprotein conducting channel. Has a central role in coupling the hydrolysis of ATP to the transfer of proteins into and across the cell membrane, serving as an ATP-driven molecular motor driving the stepwise translocation of polypeptide chains across the membrane. The sequence is that of Protein translocase subunit SecA 1 from Geobacillus thermodenitrificans (strain NG80-2).